Consider the following 184-residue polypeptide: Large ribosomal subunit protein uL6 (184 aa).

It belongs to the universal ribosomal protein uL6 family. In terms of assembly, part of the 50S ribosomal subunit.

Functionally, this protein binds to the 23S rRNA, and is important in its secondary structure. It is located near the subunit interface in the base of the L7/L12 stalk, and near the tRNA binding site of the peptidyltransferase center. The chain is Large ribosomal subunit protein uL6 from Thermococcus gammatolerans (strain DSM 15229 / JCM 11827 / EJ3).